The primary structure comprises 520 residues: GMP synthase [glutamine-hydrolyzing] (520 aa).

Residues 13–205 (KIIVLDYGSQ…ALNICKAKGD (193 aa)) enclose the Glutamine amidotransferase type-1 domain. C90 (nucleophile) is an active-site residue. Active-site residues include H179 and E181. The region spanning 206 to 395 (WSMDNFIDMQ…LGMPDHIVWR (190 aa)) is the GMPS ATP-PPase domain. Residue 233–239 (SGGVDSS) coordinates ATP.

As to quaternary structure, homodimer.

The enzyme catalyses XMP + L-glutamine + ATP + H2O = GMP + L-glutamate + AMP + diphosphate + 2 H(+). Its pathway is purine metabolism; GMP biosynthesis; GMP from XMP (L-Gln route): step 1/1. In terms of biological role, catalyzes the synthesis of GMP from XMP. The protein is GMP synthase [glutamine-hydrolyzing] of Streptococcus pneumoniae (strain P1031).